The chain runs to 161 residues: 2-C-methyl-D-erythritol 2,4-cyclodiphosphate synthase (161 aa).

Residues D9 and H11 each coordinate a divalent metal cation. Residues 9-11 (DFH) and 37-38 (HS) each bind 4-CDP-2-C-methyl-D-erythritol 2-phosphate. Residue H45 participates in a divalent metal cation binding. 4-CDP-2-C-methyl-D-erythritol 2-phosphate-binding positions include 59-61 (DIG), 64-68 (FPDTD), 135-138 (TTTE), and R145.

The protein belongs to the IspF family. As to quaternary structure, homotrimer. A divalent metal cation serves as cofactor.

It carries out the reaction 4-CDP-2-C-methyl-D-erythritol 2-phosphate = 2-C-methyl-D-erythritol 2,4-cyclic diphosphate + CMP. Its pathway is isoprenoid biosynthesis; isopentenyl diphosphate biosynthesis via DXP pathway; isopentenyl diphosphate from 1-deoxy-D-xylulose 5-phosphate: step 4/6. Its function is as follows. Involved in the biosynthesis of isopentenyl diphosphate (IPP) and dimethylallyl diphosphate (DMAPP), two major building blocks of isoprenoid compounds. Catalyzes the conversion of 4-diphosphocytidyl-2-C-methyl-D-erythritol 2-phosphate (CDP-ME2P) to 2-C-methyl-D-erythritol 2,4-cyclodiphosphate (ME-CPP) with a corresponding release of cytidine 5-monophosphate (CMP). In Leptospira interrogans serogroup Icterohaemorrhagiae serovar Lai (strain 56601), this protein is 2-C-methyl-D-erythritol 2,4-cyclodiphosphate synthase.